The following is a 60-amino-acid chain: Large ribosomal subunit protein bL32 (60 aa).

A compositionally biased stretch (basic residues) spans 1 to 16 (MAVPRRKTSPSRRGMR). The disordered stretch occupies residues 1–60 (MAVPRRKTSPSRRGMRRSADAIKRPTYVEDKDSGELRRPHHLDLKTGMYKGRQVLKKKDS). Over residues 17-44 (RSADAIKRPTYVEDKDSGELRRPHHLDL) the composition is skewed to basic and acidic residues.

The polypeptide is Large ribosomal subunit protein bL32 (Rhodopseudomonas palustris (strain ATCC BAA-98 / CGA009)).